Here is a 310-residue protein sequence, read N- to C-terminus: Olfactory receptor 5AR1 (310 aa).

At 1–28 (MDKENSSMVTEFIFMGITQDPQMEIIFF) the chain is on the extracellular side. The N-linked (GlcNAc...) asparagine glycan is linked to N5. The helical transmembrane segment at 29–49 (VVFLIVYLVNVVGNIGMIILI) threads the bilayer. Over 50–58 (TTDTQLHTP) the chain is Cytoplasmic. Residues 59–79 (MYFFLCNLSFVDLGYSSAIAP) form a helical membrane-spanning segment. The Extracellular portion of the chain corresponds to 80–100 (RMLADFLTNHKVISFSSCATQ). Residues C97 and C189 are joined by a disulfide bond. The helical transmembrane segment at 101–120 (FAFFVGFVDAECYVLAAMAY) threads the bilayer. Over 121-139 (GRFVAICRPLHYSTFMSKQ) the chain is Cytoplasmic. The helical transmembrane segment at 140–160 (VCLALMLGSYLAGLVSLVAHT) threads the bilayer. Residues 161-205 (TLTFSLSYCGSNIINHFFCEIPPLLALSCSDTYISEILLFSLCGF) lie on the Extracellular side of the membrane. The helical transmembrane segment at 206 to 226 (IEFSTILIIFISYTFILVAII) threads the bilayer. Topologically, residues 227-239 (RMRSAEGRLKAFS) are cytoplasmic. The helical transmembrane segment at 240-260 (TCGSHLTGITLFYGTVMFMYL) threads the bilayer. The Extracellular segment spans residues 261 to 271 (RPTSSYSLDQD). The chain crosses the membrane as a helical span at residues 272–292 (KWASVFYTVIIPMLNPLIYSL). Residues 293–310 (RNKDVKAAFKKLIGKKSQ) are Cytoplasmic-facing.

Belongs to the G-protein coupled receptor 1 family.

It is found in the cell membrane. Its function is as follows. Odorant receptor. The sequence is that of Olfactory receptor 5AR1 from Homo sapiens (Human).